A 130-amino-acid polypeptide reads, in one-letter code: Glycine cleavage system H protein (130 aa).

The 83-residue stretch at 24 to 106 folds into the Lipoyl-binding domain; that stretch reads TVTIGITDHA…YDEGWFFKVK (83 aa). Lys65 is modified (N6-lipoyllysine).

This sequence belongs to the GcvH family. The glycine cleavage system is composed of four proteins: P, T, L and H. It depends on (R)-lipoate as a cofactor.

Its function is as follows. The glycine cleavage system catalyzes the degradation of glycine. The H protein shuttles the methylamine group of glycine from the P protein to the T protein. In Teredinibacter turnerae (strain ATCC 39867 / T7901), this protein is Glycine cleavage system H protein.